The following is a 287-amino-acid chain: MKRIFLLIATNFAILLVASIVMSILGVNTSTMGGLLVFAAIFGFGGSFISLAISKWMAKKTMGCEVITQPRDSMERWLVETVARQAEKSGIKMPEVAIYQSPEMNAFATGPSKNNALVAVSSGLLYGMTQDEIEGVLAHEVSHVANGDMVTLTLIQGVVNTFVIFAARVVAGIINNFVSSNDEEGEGLGMFAYMAVVFVLDMLFGILASMIVAYFSRIREFKADEGAARLAGKNKMIAALERLRQGPESGAMPAQMSAFGINGKRSIAELMMSHPPLEKRIAALKNS.

2 consecutive transmembrane segments (helical) span residues Ile-4–Ile-24 and Gly-33–Ile-53. Residue His-139 coordinates Zn(2+). The active site involves Glu-140. His-143 contributes to the Zn(2+) binding site. Helical transmembrane passes span Leu-154–Ile-174 and Ala-195–Phe-215. Zn(2+) is bound at residue Glu-220.

Belongs to the peptidase M48B family. It depends on Zn(2+) as a cofactor.

The protein localises to the cell inner membrane. This is Protease HtpX from Shewanella frigidimarina (strain NCIMB 400).